Here is a 493-residue protein sequence, read N- to C-terminus: Monocarboxylate transporter 1 (493 aa).

Over 1-22 the chain is Cytoplasmic; it reads MPPAIGGPVGYTPPDGGWGWAV. Residues 23–44 form a helical membrane-spanning segment; it reads LVGAFISIGFSYAFPKSITVFF. Position 38 (Lys38) interacts with (S)-lactate. Over 45 to 55 the chain is Extracellular; sequence KEIEVIFSATT. The helical transmembrane segment at 56–80 threads the bilayer; it reads SEVSWISSIMLAVMYAGGPISSILV. Over 81–84 the chain is Cytoplasmic; that stretch reads NKYG. A helical membrane pass occupies residues 85–105; it reads SRPVMIAGGCLSGCGLIAASF. The Extracellular portion of the chain corresponds to 106-109; it reads CNTV. The chain crosses the membrane as a helical span at residues 110 to 132; sequence QELYLCIGVIGGLGLAFNLNPAL. Over 133-146 the chain is Cytoplasmic; the sequence is TMIGKYFYKKRPLA. A helical membrane pass occupies residues 147 to 169; that stretch reads NGLAMAGSPVFLSTLAPLNQAFF. Over 170–174 the chain is Extracellular; sequence DIFDW. The chain crosses the membrane as a helical span at residues 175–194; sequence RGSFLILGGLLLNCCVAGSL. Residues 195 to 254 are Cytoplasmic-facing; the sequence is MRPIGPEQVKLEKLKSKESLQEAGKSDANTDLIGGSPKGEKLSVFQTINKFLDLSLFTHR. Phosphoserine occurs at positions 210, 213, and 220. Thr224 carries the post-translational modification Phosphothreonine. Residue Ser230 is modified to Phosphoserine. Residues 255–281 traverse the membrane as a helical segment; sequence GFLLYLSGNVVMFFGLFTPLVFLSSYG. Over 282 to 288 the chain is Extracellular; that stretch reads KSKDFSS. Residues 289–310 form a helical membrane-spanning segment; sequence EKSAFLLSILAFVDMVARPSMG. Asp302 is a binding site for H(+). Arg306 provides a ligand contact to (S)-lactate. Topologically, residues 311–321 are cytoplasmic; sequence LAANTKWIRPR. Residues 322–342 form a helical membrane-spanning segment; the sequence is IQYFFAASVVANGVCHLLAPL. At 343–346 the chain is on the extracellular side; it reads STTY. The helical transmembrane segment at 347–368 threads the bilayer; it reads VGFCVYAGVFGFAFGWLSSVLF. The Cytoplasmic portion of the chain corresponds to 369–382; that stretch reads ETLMDLIGPQRFSS. A helical membrane pass occupies residues 383 to 403; sequence AVGLVTIVECCPVLLGPPLLG. At 404–414 the chain is on the extracellular side; the sequence is RLNDMYGDYKY. A helical membrane pass occupies residues 415–436; that stretch reads TYWACGVILIIAGIYLFIGMGI. The Cytoplasmic segment spans residues 437–493; that stretch reads NYRLLAKEQKAEEKQKREGKEDEASTDVDEKPKETMKAAQSPQQHSSGDPTEEESPV. Residues 447–472 show a composition bias toward basic and acidic residues; it reads AEEKQKREGKEDEASTDVDEKPKETM. The disordered stretch occupies residues 447–493; the sequence is AEEKQKREGKEDEASTDVDEKPKETMKAAQSPQQHSSGDPTEEESPV. Position 461 is a phosphoserine (Ser461). At Thr462 the chain carries Phosphothreonine. Positions 474 to 485 are enriched in polar residues; that stretch reads AAQSPQQHSSGD. Phosphoserine occurs at positions 477, 482, 483, and 491.

Belongs to the major facilitator superfamily. Monocarboxylate porter (TC 2.A.1.13) family. As to quaternary structure, interacts with isoform 2 of BSG; interaction mediates SLC16A1 targeting to the plasma membrane. Interacts with EMB; interaction mediates SLC16A1 targeting to the plasma membrane. As to expression, detected in liver, brain, spinal cord, spermatozoa, muscle, white adipose tissue and brown adipose tissue (at protein level). Widely expressed, except in pancreas, where expression is not detectable.

The protein localises to the cell membrane. It localises to the basolateral cell membrane. Its subcellular location is the apical cell membrane. The catalysed reaction is (S)-lactate(in) + H(+)(in) = (S)-lactate(out) + H(+)(out). The enzyme catalyses acetate(out) + H(+)(out) = acetate(in) + H(+)(in). It catalyses the reaction acetoacetate(out) + H(+)(out) = acetoacetate(in) + H(+)(in). It carries out the reaction pyruvate(out) + H(+)(out) = pyruvate(in) + H(+)(in). The catalysed reaction is (R)-3-hydroxybutanoate(out) + H(+)(out) = (R)-3-hydroxybutanoate(in) + H(+)(in). The enzyme catalyses 3-methyl-2-oxobutanoate(out) + H(+)(out) = 3-methyl-2-oxobutanoate(in) + H(+)(in). It catalyses the reaction 4-methyl-2-oxopentanoate(out) + H(+)(out) = 4-methyl-2-oxopentanoate(in) + H(+)(in). It carries out the reaction succinate(in) + 2 H(+)(in) = succinate(out) + 2 H(+)(out). Functionally, bidirectional proton-coupled monocarboxylate transporter. Catalyzes the rapid transport across the plasma membrane of many monocarboxylates such as lactate, pyruvate, acetate and the ketone bodies acetoacetate and beta-hydroxybutyrate, and thus contributes to the maintenance of intracellular pH. The transport direction is determined by the proton motive force and the concentration gradient of the substrate monocarboxylate. MCT1 is a major lactate exporter. Plays a role in cellular responses to a high-fat diet by modulating the cellular levels of lactate and pyruvate that contribute to the regulation of central metabolic pathways and insulin secretion, with concomitant effects on plasma insulin levels and blood glucose homeostasis. Facilitates the protonated monocarboxylate form of succinate export, that its transient protonation upon muscle cell acidification in exercising muscle and ischemic heart. Functions via alternate outward- and inward-open conformation states. Protonation and deprotonation of 302-Asp is essential for the conformational transition. The polypeptide is Monocarboxylate transporter 1 (Slc16a1) (Mus musculus (Mouse)).